Reading from the N-terminus, the 33-residue chain is Dolabellanin-B2 (33 aa).

Post-translationally, contains two disulfide bonds. Up to two of the methionines may be oxidized to methionine sulfoxides.

Its subcellular location is the secreted. Functionally, has antibacterial activity against Gram-negative bacteria E.coli JM109 and DH5-alpha, H.influenza IID 983, and V.vulnificus RIMD 2219009. Has antibacterial activity against Gram-positive bacteria S.aureus IID 1677, B.subtilis RIMD 0225014 and L.monocytogenes VIU206. Possesses antifungal activity against S.cerevisiae A581A, S.pombe IFO 1628, C.albicans ATCC 36232 and TIMM-1623, and C.tropicalis TIMM-0313. The protein is Dolabellanin-B2 of Dolabella auricularia (Shoulderblade sea cat).